Consider the following 202-residue polypeptide: dITP/XTP pyrophosphatase (202 aa).

11-16 (TNNANK) provides a ligand contact to substrate. Catalysis depends on D73, which acts as the Proton acceptor. D73 is a binding site for Mg(2+). Substrate contacts are provided by residues S74, 155 to 158 (FGYD), K178, and 183 to 184 (HR).

Belongs to the HAM1 NTPase family. In terms of assembly, homodimer. Mg(2+) is required as a cofactor.

The enzyme catalyses XTP + H2O = XMP + diphosphate + H(+). It carries out the reaction dITP + H2O = dIMP + diphosphate + H(+). The catalysed reaction is ITP + H2O = IMP + diphosphate + H(+). Its function is as follows. Pyrophosphatase that catalyzes the hydrolysis of nucleoside triphosphates to their monophosphate derivatives, with a high preference for the non-canonical purine nucleotides XTP (xanthosine triphosphate), dITP (deoxyinosine triphosphate) and ITP. Seems to function as a house-cleaning enzyme that removes non-canonical purine nucleotides from the nucleotide pool, thus preventing their incorporation into DNA/RNA and avoiding chromosomal lesions. In Lactiplantibacillus plantarum (strain ATCC BAA-793 / NCIMB 8826 / WCFS1) (Lactobacillus plantarum), this protein is dITP/XTP pyrophosphatase.